The primary structure comprises 270 residues: Phospholysine phosphohistidine inorganic pyrophosphate phosphatase (270 aa).

Residues D19 and C21 each coordinate Mg(2+). Residues 19 to 21, 56 to 57, and K191 contribute to the substrate site; these read DMC and TN. D216 provides a ligand contact to Mg(2+).

This sequence belongs to the HAD-like hydrolase superfamily. Mg(2+) is required as a cofactor.

The protein localises to the cytoplasm. It localises to the nucleus. It carries out the reaction diphosphate + H2O = 2 phosphate + H(+). Phosphatase that hydrolyzes imidodiphosphate, 3-phosphohistidine and 6-phospholysine. Has broad substrate specificity and can also hydrolyze inorganic diphosphate, but with lower efficiency. The chain is Phospholysine phosphohistidine inorganic pyrophosphate phosphatase (lhpp) from Danio rerio (Zebrafish).